A 92-amino-acid polypeptide reads, in one-letter code: Non-specific lipid-transfer protein A (92 aa).

4 disulfides stabilise this stretch: Cys-3-Cys-51, Cys-13-Cys-28, Cys-29-Cys-74, and Cys-49-Cys-88.

The protein belongs to the plant LTP family.

Its function is as follows. Plant non-specific lipid-transfer proteins transfer phospholipids as well as galactolipids across membranes. May play a role in wax or cutin deposition in the cell walls of expanding epidermal cells and certain secretory tissues. This chain is Non-specific lipid-transfer protein A, found in Ricinus communis (Castor bean).